A 453-amino-acid chain; its full sequence is UDP-N-acetylmuramoylalanine--D-glutamate ligase (453 aa).

117–123 (GSNGKST) provides a ligand contact to ATP.

Belongs to the MurCDEF family.

The protein localises to the cytoplasm. It catalyses the reaction UDP-N-acetyl-alpha-D-muramoyl-L-alanine + D-glutamate + ATP = UDP-N-acetyl-alpha-D-muramoyl-L-alanyl-D-glutamate + ADP + phosphate + H(+). The protein operates within cell wall biogenesis; peptidoglycan biosynthesis. In terms of biological role, cell wall formation. Catalyzes the addition of glutamate to the nucleotide precursor UDP-N-acetylmuramoyl-L-alanine (UMA). The protein is UDP-N-acetylmuramoylalanine--D-glutamate ligase of Chromobacterium violaceum (strain ATCC 12472 / DSM 30191 / JCM 1249 / CCUG 213 / NBRC 12614 / NCIMB 9131 / NCTC 9757 / MK).